A 549-amino-acid polypeptide reads, in one-letter code: DNA polymerase lambda (549 aa).

The region spanning 17-116 is the BRCT domain; it reads DPDGMFRGVS…ERLPEHKFAI (100 aa). The segment at 126 to 197 is disordered; it reads KEGGAAGSGV…ASGDSKETIA (72 aa). Positions 149–175 are enriched in basic and acidic residues; it reads PENRKETAGGNRESRDAIAHPNEDSDV. Positions 180–197 are enriched in polar residues; the sequence is STCTSSQSASGDSKETIA. The segment at 233 to 247 is DNA-binding; the sequence is NIYRALGDDRRSFSY. His-280 is a catalytic residue. The DNA-binding stretch occupies residues 315–318; it reads GPAT. Residues Arg-356, 387–390, and 396–399 contribute to the dCTP site; these read SYRR and GDMD. An involved in primer binding region spans residues 390–399; it reads RGKSSCGDMD. Mn(2+) contacts are provided by Asp-397, Asp-399, and Asp-464. The tract at residues 438 to 479 is DNA-binding; sequence IEGTDCGVDTYFGLCTYPGRELRHRIDLKVYPRNRHAFGLLA. Residue Asn-487 participates in dCTP binding.

This sequence belongs to the DNA polymerase type-X family. As to quaternary structure, interacts with PCNA. The cofactor is Mn(2+). Expressed in proliferating tissues. Expressed in roots, root apex, young leaves, shoot apical meristem (SAM), flag leaves and panicles.

The protein resides in the nucleus. The catalysed reaction is DNA(n) + a 2'-deoxyribonucleoside 5'-triphosphate = DNA(n+1) + diphosphate. Functionally, repair polymerase involved in base excision repair (BER) and responsible for repair of lesions that give rise to abasic (AP) sites in DNA. Has both DNA polymerase and terminal transferase activities. Has a 5'-deoxyribose-5-phosphate lyase (dRP lyase) activity. The protein is DNA polymerase lambda of Oryza sativa subsp. japonica (Rice).